Reading from the N-terminus, the 523-residue chain is Synaptotagmin-10 (523 aa).

Over 1-55 the chain is Vesicular; sequence MSFRKEDGVSSLCQKALHIITELCFAGQVEWDKCSGIFPADRSGQGGGGTDISVS. Residues 13–35 are cysteine motif; sequence CQKALHIITELCFAGQVEWDKCS. The helical transmembrane segment at 56-76 threads the bilayer; it reads LLAVVVSFCGLALLVVSLFVF. Topologically, residues 77-523 are cytoplasmic; that stretch reads WKLCWPCWKS…CSSPRPPSTP (447 aa). Threonine 136 is subject to Phosphothreonine. C2 domains are found at residues 231-352 and 363-496; these read TCGK…TVWK and DLGE…THWH. Positions 262, 268, 320, 321, 322, 325, 328, 394, 400, 454, and 456 each coordinate Ca(2+).

The protein belongs to the synaptotagmin family. In terms of assembly, homodimer; disulfide-linked via the cysteine motif. Can also form heterodimers with SYT3, SYT6, SYT7 and SYT9. It depends on Ca(2+) as a cofactor. As to expression, highly expressed in the olfactory bulb.

It is found in the cytoplasmic vesicle. The protein localises to the secretory vesicle membrane. Ca(2+) sensor specifically required for the Ca(2+)-dependent exocytosis of secretory vesicles containing IGF1 in neurons of the olfactory bulb. Exocytosis of IGF1 is required for sensory perception of smell. Not involved in Ca(2+)-dependent synaptic vesicle exocytosis. Acts through Ca(2+) and phospholipid binding to the C2 domain: Ca(2+) induces binding of the C2-domains to phospholipid membranes and to assembled SNARE-complexes; both actions contribute to triggering exocytosis. This chain is Synaptotagmin-10, found in Mus musculus (Mouse).